Consider the following 280-residue polypeptide: Urease accessory protein UreD 1 (280 aa).

Belongs to the UreD family. In terms of assembly, ureD, UreF and UreG form a complex that acts as a GTP-hydrolysis-dependent molecular chaperone, activating the urease apoprotein by helping to assemble the nickel containing metallocenter of UreC. The UreE protein probably delivers the nickel.

The protein localises to the cytoplasm. Its function is as follows. Required for maturation of urease via the functional incorporation of the urease nickel metallocenter. This chain is Urease accessory protein UreD 1, found in Brucella canis (strain ATCC 23365 / NCTC 10854 / RM-666).